The chain runs to 306 residues: ADP-polyphosphate phosphotransferase 2 (306 aa).

Belongs to the polyphosphate kinase 2 (PPK2) family. Class I subfamily.

The catalysed reaction is [phosphate](n) + ATP = [phosphate](n+1) + ADP. It catalyses the reaction [phosphate](n) + GTP = [phosphate](n+1) + GDP. Uses inorganic polyphosphate (polyP) as a donor to convert ADP to ATP. Can also convert GDP to GTP, with lower efficiency. This Rhizobium meliloti (strain 1021) (Ensifer meliloti) protein is ADP-polyphosphate phosphotransferase 2.